A 64-amino-acid polypeptide reads, in one-letter code: Probable cytochrome c oxidase subunit 5C-1 (64 aa).

Residues serine 15–tryptophan 34 form a helical membrane-spanning segment.

The protein belongs to the cytochrome c oxidase subunit 5C family.

Its subcellular location is the mitochondrion inner membrane. This protein is one of the nuclear-coded polypeptide chains of cytochrome c oxidase, the terminal oxidase in mitochondrial electron transport. The polypeptide is Probable cytochrome c oxidase subunit 5C-1 (Arabidopsis thaliana (Mouse-ear cress)).